Here is a 263-residue protein sequence, read N- to C-terminus: Diphthine synthase (263 aa).

S-adenosyl-L-methionine-binding positions include Leu11, Asp89, Ala92, 117–118 (SV), Leu166, and Leu208.

This sequence belongs to the diphthine synthase family. Homodimer.

The catalysed reaction is 2-[(3S)-amino-3-carboxypropyl]-L-histidyl-[translation elongation factor 2] + 3 S-adenosyl-L-methionine = diphthine-[translation elongation factor 2] + 3 S-adenosyl-L-homocysteine + 3 H(+). It functions in the pathway protein modification; peptidyl-diphthamide biosynthesis. Its function is as follows. S-adenosyl-L-methionine-dependent methyltransferase that catalyzes the trimethylation of the amino group of the modified target histidine residue in translation elongation factor 2 (EF-2), to form an intermediate called diphthine. The three successive methylation reactions represent the second step of diphthamide biosynthesis. The polypeptide is Diphthine synthase (Methanopyrus kandleri (strain AV19 / DSM 6324 / JCM 9639 / NBRC 100938)).